The primary structure comprises 112 residues: UPF0212 protein Mhun_0078 (112 aa).

It belongs to the UPF0212 family.

This Methanospirillum hungatei JF-1 (strain ATCC 27890 / DSM 864 / NBRC 100397 / JF-1) protein is UPF0212 protein Mhun_0078.